The sequence spans 219 residues: Small ribosomal subunit protein uS3 (219 aa).

A KH type-2 domain is found at 38–106 (IRTYLKKKLY…KLNLEIKEIK (69 aa)).

The protein belongs to the universal ribosomal protein uS3 family. In terms of assembly, part of the 30S ribosomal subunit. Forms a tight complex with proteins S10 and S14.

Functionally, binds the lower part of the 30S subunit head. Binds mRNA in the 70S ribosome, positioning it for translation. The sequence is that of Small ribosomal subunit protein uS3 from Lachnoclostridium phytofermentans (strain ATCC 700394 / DSM 18823 / ISDg) (Clostridium phytofermentans).